The primary structure comprises 449 residues: Naphthalene 1,2-dioxygenase system, large oxygenase component (449 aa).

In terms of domain architecture, Rieske spans Trp-39–Glu-137. [2Fe-2S] cluster-binding residues include Cys-81, His-83, Cys-101, and His-104. Fe cation-binding residues include His-208, His-213, and Asp-362.

The protein belongs to the bacterial ring-hydroxylating dioxygenase alpha subunit family. As to quaternary structure, the naphthalene dioxygenase (NDO) multicomponent enzyme system is composed of an electron transfer component and a dioxygenase component (iron sulfur protein (ISP)). The electron transfer component is composed of a ferredoxin reductase (NdoR) and a ferredoxin (NdoA), and the dioxygenase component is formed of a heterohexamer (trimer of heterodimers) of three large alpha subunits (NdoB) and three small beta subunits (NdoC). [2Fe-2S] cluster serves as cofactor. Requires Fe(2+) as cofactor.

The catalysed reaction is naphthalene + NADH + O2 + H(+) = (1R,2S)-1,2-dihydronaphthalene-1,2-diol + NAD(+). The protein operates within aromatic compound metabolism; naphthalene degradation. Its function is as follows. Component of the naphthalene dioxygenase (NDO) multicomponent enzyme system which catalyzes the incorporation of both atoms of molecular oxygen into naphthalene to form cis-(1R,2S)-dihydroxy-1,2-dihydronaphthalene. The alpha subunit has a catalytic role in the holoenzyme. Also able to catalyze the cis-dihydroxylation of biphenyl and phenanthrene. The polypeptide is Naphthalene 1,2-dioxygenase system, large oxygenase component (Pseudomonas putida (Arthrobacter siderocapsulatus)).